Consider the following 345-residue polypeptide: MTDLTTFHLPERITNTEAHRELGQAMVKAWRTDGIFQITLSKPQEQTTDEAFAESRQFFSQDFETKSRHVSALTYSGYIASREEVTAGEADYSEIFTICPDIGLEDARVRENLPCHGPVPWPGAAYRDRMKAFMGMLGTFGERLLQLIALGLDLDDMDTFTRLTQDGWHHMRVLRFPTVQSSENARGIGAHTDYGMLVIAAQDDVGGLYVRPPIEGERRNRNWLPSESTAGVYEHDDGWNFIKPMPAVLTVFPGDFLQFLTGGHLLSTPHKVRLNTRERFAMAYFHEPNFDAWVEPLEADAAVAPIHYGTHFTNMFMRCYPKRITTRRIMENGLLDKLPTLSELA.

The Fe2OG dioxygenase domain occupies 167–288 (GWHHMRVLRF…RFAMAYFHEP (122 aa)). 2 residues coordinate Fe cation: H191 and H270.

This sequence belongs to the iron/ascorbate-dependent oxidoreductase family. Monomer. Requires Fe(2+) as cofactor.

It catalyses the reaction 2-oxoglutarate + O2 + 2 H(+) = ethene + 3 CO2 + H2O. It carries out the reaction L-arginine + 2-oxoglutarate + O2 = guanidine + L-glutamate 5-semialdehyde + succinate + CO2. It participates in alkene biosynthesis; ethylene biosynthesis via 2-oxoglutarate. Functionally, simultaneously catalyzes two reactions, namely formation of ethylene and of succinate from 2-oxoglutarate. This Ralstonia nicotianae (strain ATCC BAA-1114 / GMI1000) (Ralstonia solanacearum) protein is 2-oxoglutarate-dependent ethylene/succinate-forming enzyme (efe).